We begin with the raw amino-acid sequence, 386 residues long: Magnesium transporter MRS2-7 (386 aa).

Helical transmembrane passes span 321-341 (LMLS…GIFG) and 355-375 (IFKW…VIIL). The Required for magnesium transport activity motif lies at 341 to 343 (GMN).

This sequence belongs to the CorA metal ion transporter (MIT) (TC 1.A.35.5) family. Isoform 1 is expressed in the whole plant. Isoform 4 is expressed only in roots and flowers.

Its subcellular location is the endoplasmic reticulum membrane. Its function is as follows. Low-affinity magnesium transporter that mediates the influx of magnesium. This is Magnesium transporter MRS2-7 (MRS2-7) from Arabidopsis thaliana (Mouse-ear cress).